A 724-amino-acid chain; its full sequence is Probable ATP-dependent RNA helicase DDX4 (724 aa).

Positions methionine 1–isoleucine 11 are enriched in acidic residues. Disordered stretches follow at residues methionine 1–glutamate 25 and serine 37–arginine 241. Positions serine 108–arginine 130 are enriched in basic and acidic residues. Positions glutamate 168 to threonine 182 are enriched in polar residues. The Q motif motif lies at leucine 286–lysine 314. Positions isoleucine 317–phenylalanine 500 constitute a Helicase ATP-binding domain. Residue alanine 330 to threonine 337 participates in ATP binding. Positions aspartate 444–aspartate 447 match the DEAD box motif. Residues aspartate 512–alanine 675 enclose the Helicase C-terminal domain. Residues alanine 683 to alanine 692 show a composition bias toward polar residues. The tract at residues alanine 683 to glycine 724 is disordered. Over residues serine 693–glycine 704 the composition is skewed to basic and acidic residues. The span at aspartate 705 to alanine 715 shows a compositional bias: polar residues.

Belongs to the DEAD box helicase family. DDX4/VASA subfamily.

Its subcellular location is the cytoplasm. The catalysed reaction is ATP + H2O = ADP + phosphate + H(+). Its function is as follows. Probable ATP-dependent RNA helicase required during spermatogenesis to repress transposable elements and preventing their mobilization, which is essential for the germline integrity. Acts via the piRNA metabolic process, which mediates the repression of transposable elements during meiosis by forming complexes composed of piRNAs and Piwi proteins and governs the methylation and subsequent repression of transposons. Involved in the secondary piRNAs metabolic process, the production of piRNAs in fetal male germ cells through a ping-pong amplification cycle. The chain is Probable ATP-dependent RNA helicase DDX4 from Pelophylax lessonae (Pool frog).